The chain runs to 143 residues: Nucleoside diphosphate kinase (143 aa).

ATP is bound by residues K11, F59, R87, T93, R104, and N114. The active-site Pros-phosphohistidine intermediate is H117.

Belongs to the NDK family. As to quaternary structure, homotetramer. It depends on Mg(2+) as a cofactor.

It localises to the cytoplasm. The catalysed reaction is a 2'-deoxyribonucleoside 5'-diphosphate + ATP = a 2'-deoxyribonucleoside 5'-triphosphate + ADP. The enzyme catalyses a ribonucleoside 5'-diphosphate + ATP = a ribonucleoside 5'-triphosphate + ADP. In terms of biological role, major role in the synthesis of nucleoside triphosphates other than ATP. The ATP gamma phosphate is transferred to the NDP beta phosphate via a ping-pong mechanism, using a phosphorylated active-site intermediate. This is Nucleoside diphosphate kinase from Shewanella sp. (strain ANA-3).